Reading from the N-terminus, the 260-residue chain is Exosome complex component Rrp42 (260 aa).

It belongs to the RNase PH family. Rrp42 subfamily. Component of the archaeal exosome complex. Forms a hexameric ring-like arrangement composed of 3 Rrp41-Rrp42 heterodimers. The hexameric ring associates with a trimer of Rrp4 and/or Csl4 subunits.

It localises to the cytoplasm. In terms of biological role, non-catalytic component of the exosome, which is a complex involved in RNA degradation. Contributes to the structuring of the Rrp41 active site. This is Exosome complex component Rrp42 from Methanocella arvoryzae (strain DSM 22066 / NBRC 105507 / MRE50).